Here is a 216-residue protein sequence, read N- to C-terminus: Glycerol-3-phosphate acyltransferase 3 (216 aa).

5 helical membrane passes run 6 to 26 (LLLV…YLVS), 58 to 78 (LVAA…GLVI), 92 to 112 (ILFA…WPVF), 125 to 145 (FGGM…VLII), and 158 to 178 (ITGV…SGFP).

The protein belongs to the PlsY family. In terms of assembly, probably interacts with PlsX.

It localises to the cell membrane. The catalysed reaction is an acyl phosphate + sn-glycerol 3-phosphate = a 1-acyl-sn-glycero-3-phosphate + phosphate. The protein operates within lipid metabolism; phospholipid metabolism. Its function is as follows. Catalyzes the transfer of an acyl group from acyl-phosphate (acyl-PO(4)) to glycerol-3-phosphate (G3P) to form lysophosphatidic acid (LPA). This enzyme utilizes acyl-phosphate as fatty acyl donor, but not acyl-CoA or acyl-ACP. The polypeptide is Glycerol-3-phosphate acyltransferase 3 (Dehalococcoides mccartyi (strain ATCC BAA-2266 / KCTC 15142 / 195) (Dehalococcoides ethenogenes (strain 195))).